The chain runs to 373 residues: 3 beta-hydroxysteroid dehydrogenase/Delta 5--&gt;4-isomerase (373 aa).

Tyr-155 (proton acceptor) is an active-site residue. Lys-159 contacts NAD(+). A helical membrane pass occupies residues 288–308; that stretch reads ISLQYWLAFLLEIVSFLLSPI.

This sequence belongs to the 3-beta-HSD family.

Its subcellular location is the endoplasmic reticulum membrane. It is found in the mitochondrion membrane. The enzyme catalyses a 3beta-hydroxy-Delta(5)-steroid + NAD(+) = a 3-oxo-Delta(5)-steroid + NADH + H(+). The catalysed reaction is a 3-oxo-Delta(5)-steroid = a 3-oxo-Delta(4)-steroid. It participates in lipid metabolism; steroid biosynthesis. Its function is as follows. 3-beta-HSD is a bifunctional enzyme, that catalyzes the oxidative conversion of Delta(5)-ene-3-beta-hydroxy steroid, and the oxidative conversion of ketosteroids. The 3-beta-HSD enzymatic system plays a crucial role in the biosynthesis of all classes of hormonal steroids. The protein is 3 beta-hydroxysteroid dehydrogenase/Delta 5--&gt;4-isomerase (HSD3B) of Bos taurus (Bovine).